Consider the following 161-residue polypeptide: UPF0225 protein NTHI0386 (161 aa).

It belongs to the UPF0225 family.

The chain is UPF0225 protein NTHI0386 from Haemophilus influenzae (strain 86-028NP).